A 60-amino-acid chain; its full sequence is Phospholipase A2 (60 aa).

Residues Tyr-27, Gly-29, and Gly-31 each coordinate Ca(2+). The cysteines at positions 28 and 44 are disulfide-linked. His-47 is an active-site residue. Asp-48 is a binding site for Ca(2+).

Requires Ca(2+) as cofactor. Expressed by the venom gland.

It is found in the secreted. It carries out the reaction a 1,2-diacyl-sn-glycero-3-phosphocholine + H2O = a 1-acyl-sn-glycero-3-phosphocholine + a fatty acid + H(+). Snake venom phospholipase A2 (PLA2) that displays mild but significant inhibition of mouse platelet aggregation induced by ADP and collagen. In vivo, induces edema in the foot pads and gastrocnemius muscles of mice but shows no myonecrotic or myotoxic activity. PA2 catalyzes the calcium-dependent hydrolysis of the 2-acyl groups in 3-sn-phosphoglycerides. In Lachesis muta rhombeata (Bushmaster), this protein is Phospholipase A2.